A 908-amino-acid chain; its full sequence is NADH-quinone oxidoreductase subunit G (908 aa).

Residues 2-83 (ATIHVDGKEY…GTFISIDDEE (82 aa)) form the 2Fe-2S ferredoxin-type domain. The [2Fe-2S] cluster site is built by cysteine 34, cysteine 45, cysteine 48, and cysteine 67. Positions 83-122 (EAKQFRESVVEWLMTNHPHDCPVCEEGGNCHLQDMTVMTG) constitute a 4Fe-4S His(Cys)3-ligated-type domain. [4Fe-4S] cluster contacts are provided by histidine 99, cysteine 103, cysteine 106, cysteine 112, cysteine 151, cysteine 154, cysteine 157, cysteine 201, cysteine 228, cysteine 231, cysteine 235, and cysteine 263. The region spanning 221–277 (MQFAPSICQQCSIGCNISPGERYGELRRIENRYNGTVNHYFLCDRGRFGYGYVNLKD) is the 4Fe-4S Mo/W bis-MGD-type domain.

This sequence belongs to the complex I 75 kDa subunit family. Composed of 13 different subunits. Subunits NuoCD, E, F, and G constitute the peripheral sector of the complex. [2Fe-2S] cluster serves as cofactor. The cofactor is [4Fe-4S] cluster.

It carries out the reaction a quinone + NADH + 5 H(+)(in) = a quinol + NAD(+) + 4 H(+)(out). NDH-1 shuttles electrons from NADH, via FMN and iron-sulfur (Fe-S) centers, to quinones in the respiratory chain. The immediate electron acceptor for the enzyme in this species is believed to be ubiquinone. Couples the redox reaction to proton translocation (for every two electrons transferred, four hydrogen ions are translocated across the cytoplasmic membrane), and thus conserves the redox energy in a proton gradient. This Salmonella typhi protein is NADH-quinone oxidoreductase subunit G (nuoG).